A 764-amino-acid chain; its full sequence is 5-methyltetrahydropteroyltriglutamate--homocysteine methyltransferase (764 aa).

5-methyltetrahydropteroyltri-L-glutamate contacts are provided by residues arginine 16–lysine 19 and lysine 115. Residues isoleucine 435–serine 437 and glutamate 488 each bind L-homocysteine. Residues isoleucine 435 to serine 437 and glutamate 488 each bind L-methionine. 5-methyltetrahydropteroyltri-L-glutamate is bound by residues arginine 519–cysteine 520 and tryptophan 565. Residue aspartate 603 participates in L-homocysteine binding. Aspartate 603 contacts L-methionine. A 5-methyltetrahydropteroyltri-L-glutamate-binding site is contributed by glutamate 609. Histidine 645, cysteine 647, and glutamate 669 together coordinate Zn(2+). The active-site Proton donor is the histidine 698. Cysteine 730 provides a ligand contact to Zn(2+).

This sequence belongs to the vitamin-B12 independent methionine synthase family. Zn(2+) serves as cofactor.

The catalysed reaction is 5-methyltetrahydropteroyltri-L-glutamate + L-homocysteine = tetrahydropteroyltri-L-glutamate + L-methionine. It participates in amino-acid biosynthesis; L-methionine biosynthesis via de novo pathway; L-methionine from L-homocysteine (MetE route): step 1/1. In terms of biological role, catalyzes the transfer of a methyl group from 5-methyltetrahydrofolate to homocysteine resulting in methionine formation. This is 5-methyltetrahydropteroyltriglutamate--homocysteine methyltransferase from Burkholderia thailandensis (strain ATCC 700388 / DSM 13276 / CCUG 48851 / CIP 106301 / E264).